The sequence spans 600 residues: NADH-quinone oxidoreductase subunit C/D (600 aa).

The tract at residues 1-190 (MIDLMPKKNT…EPFFLNEQKE (190 aa)) is NADH dehydrogenase I subunit C. The NADH dehydrogenase I subunit D stretch occupies residues 214 to 600 (EFMFLNLGPN…IDFVMSDVDR (387 aa)).

The protein in the N-terminal section; belongs to the complex I 30 kDa subunit family. This sequence in the C-terminal section; belongs to the complex I 49 kDa subunit family. As to quaternary structure, NDH-1 is composed of 13 different subunits. Subunits NuoB, CD, E, F, and G constitute the peripheral sector of the complex.

The protein localises to the cell membrane. It carries out the reaction a quinone + NADH + 5 H(+)(in) = a quinol + NAD(+) + 4 H(+)(out). NDH-1 shuttles electrons from NADH, via FMN and iron-sulfur (Fe-S) centers, to quinones in the respiratory chain. The immediate electron acceptor for the enzyme in this species is believed to be ubiquinone. Couples the redox reaction to proton translocation (for every two electrons transferred, four hydrogen ions are translocated across the cytoplasmic membrane), and thus conserves the redox energy in a proton gradient. The sequence is that of NADH-quinone oxidoreductase subunit C/D from Buchnera aphidicola subsp. Acyrthosiphon pisum (strain Tuc7).